A 297-amino-acid chain; its full sequence is MRPSLSDYQHVASGKVRELYRVDDEHLLFVATDRISAFDFVLDTPIPDKGRILTAMSVFFFGLLTVPNHLAGPPDDPRIPEEVLGRALLVRRLDMLPVECVARGYLTGSGLLDYQRTGAVCGHVLPQGLGEASRLDPPLFTPATKADIGEHDMNVDFAAVVGLVGAVRANQLRDETIKIYTRAAAHALHKGIILADTKFEFGVDIEGNLVLADEVFTPDSSRYWDAAHYQPGVVQDSFDKQFVRNWLTGPESGWDRASDTPPPPLPDEVAVATRERYIEAYERISGLSFSDWIGPSA.

This sequence belongs to the SAICAR synthetase family.

The catalysed reaction is 5-amino-1-(5-phospho-D-ribosyl)imidazole-4-carboxylate + L-aspartate + ATP = (2S)-2-[5-amino-1-(5-phospho-beta-D-ribosyl)imidazole-4-carboxamido]succinate + ADP + phosphate + 2 H(+). It participates in purine metabolism; IMP biosynthesis via de novo pathway; 5-amino-1-(5-phospho-D-ribosyl)imidazole-4-carboxamide from 5-amino-1-(5-phospho-D-ribosyl)imidazole-4-carboxylate: step 1/2. The polypeptide is Phosphoribosylaminoimidazole-succinocarboxamide synthase (Mycobacteroides abscessus (strain ATCC 19977 / DSM 44196 / CCUG 20993 / CIP 104536 / JCM 13569 / NCTC 13031 / TMC 1543 / L948) (Mycobacterium abscessus)).